Here is a 242-residue protein sequence, read N- to C-terminus: ATP synthase subunit a (242 aa).

The next 5 helical transmembrane spans lie at 21-41, 83-103, 117-137, 175-195, and 198-218; these read LSSI…AIIC, AVTL…FSIV, DATV…FYGI, LYGN…LFFN, and AWGW…SIFV.

It belongs to the ATPase A chain family. F-type ATPases have 2 components, CF(1) - the catalytic core - and CF(0) - the membrane proton channel. CF(1) has five subunits: alpha(3), beta(3), gamma(1), delta(1), epsilon(1). CF(0) has three main subunits: a(1), b(2) and c(9-12). The alpha and beta chains form an alternating ring which encloses part of the gamma chain. CF(1) is attached to CF(0) by a central stalk formed by the gamma and epsilon chains, while a peripheral stalk is formed by the delta and b chains.

The protein resides in the cell membrane. In terms of biological role, key component of the proton channel; it plays a direct role in the translocation of protons across the membrane. The protein is ATP synthase subunit a of Staphylococcus aureus (strain Newman).